Reading from the N-terminus, the 129-residue chain is MRKIYATGKRKTAIAKVWLTPGKGELSINEQSLNQWLGGHEAIKMKVMQPLLLTKQEQSVDIKAVVFGGGYSAQAEALRHGISKALNAYDIVFRAILKPKGLLTRDSRVVERKKYGKRKARRSPQFSKR.

Belongs to the universal ribosomal protein uS9 family.

This is Small ribosomal subunit protein uS9 from Helicobacter acinonychis (strain Sheeba).